A 291-amino-acid polypeptide reads, in one-letter code: tRNA dimethylallyltransferase (291 aa).

11 to 18 (GPTASGKS) provides a ligand contact to ATP. Residue 13-18 (TASGKS) participates in substrate binding. The interaction with substrate tRNA stretch occupies residues 42–45 (DSMQ).

The protein belongs to the IPP transferase family. As to quaternary structure, monomer. The cofactor is Mg(2+).

It catalyses the reaction adenosine(37) in tRNA + dimethylallyl diphosphate = N(6)-dimethylallyladenosine(37) in tRNA + diphosphate. Catalyzes the transfer of a dimethylallyl group onto the adenine at position 37 in tRNAs that read codons beginning with uridine, leading to the formation of N6-(dimethylallyl)adenosine (i(6)A). This chain is tRNA dimethylallyltransferase, found in Rubrobacter xylanophilus (strain DSM 9941 / JCM 11954 / NBRC 16129 / PRD-1).